The primary structure comprises 154 residues: Protein ripply (154 aa).

A WRPW motif motif is present at residues tryptophan 38 to tryptophan 41. Disordered regions lie at residues isoleucine 54 to proline 86 and glutamate 121 to asparagine 154. The interval histidine 85–valine 119 is ripply homology domain. Positions glutamate 121–aspartate 140 are enriched in acidic residues.

The protein belongs to the ripply family. In terms of tissue distribution, in the late gastrula stage, expression appears in the dorsal presomitic mesoderm and in the first three pairs of nascent somites. Expressed strongly in forming somites and then expression is rapidly down-regulated except in the first somite pair where expression is maintained for a longer period. Also expressed in the presumptive notochord and in the tail bud at the 48 hour larval stage. Expression disappears by the 72 hour stage.

It is found in the nucleus. Its function is as follows. May play a role in somitogenesis. The protein is Protein ripply of Branchiostoma belcheri (Amphioxus).